Reading from the N-terminus, the 301-residue chain is uncharacterized protein (301 aa).

One can recognise an FHA domain in the interval 27 to 85 (YKIGRHTNKSTSPSPSNLFFNSKVLSRQHAELWLDKDTLSVYIRDVKSSNGTFVNETRL). The interval 187 to 236 (TGKTRDNRNNHHYSRKSSPHISSLAVPSTKHLDGERDRNLKRSTSPLSSS) is disordered. Serine 204 bears the Phosphoserine mark. Residues 216 to 226 (KHLDGERDRNL) show a composition bias toward basic and acidic residues. A Phosphoserine modification is found at serine 231.

As to quaternary structure, interacts with sad1.

Its subcellular location is the nucleus. This is an uncharacterized protein from Schizosaccharomyces pombe (strain 972 / ATCC 24843) (Fission yeast).